A 142-amino-acid chain; its full sequence is UPF0102 protein Bcen2424_0290 (142 aa).

The segment covering 1–19 (MCHAAPARPEGARGRPPSG) has biased composition (low complexity). The interval 1-27 (MCHAAPARPEGARGRPPSGDNFSGAAR) is disordered.

It belongs to the UPF0102 family.

This is UPF0102 protein Bcen2424_0290 from Burkholderia cenocepacia (strain HI2424).